A 1435-amino-acid chain; its full sequence is MQESFLNFCQEINFDIPEYLKNTKIANPYHDEEKSFFSCEIDFLETPKFEDFKSFYLKTKNFLNQLVKEQKLLFKIENIFYEKSEIKKYLDWIAEHFFKNFDFKNTFRIDDLKVNLDGKIFLTAHSKHSFDLYKDFVEFANKKMQSFGFENFLLKLELNQIEITNNQPLVSSINSQVKTQASSENQSFKKSNFYNKKRHIQLSLKELIKTQEMFVSVVGMVFKKEIITTNSKTKIFKISITDFQEATRAQKFSYLEKDQEIFDSIQINDWVNVCGEIQLEKMSLKQFIKIEKIEKIRSPIKDRQDNEKEKRIELSFRSKMSTMDGILSPLDIVKQAKKFNHSSIAILDHNSVQAFPDFHNLTYKDKDFKVIYGMTLSVISKRNKIFVEPLKDKFFDYKILDQEYVVYDIETTGLSPMLNELIQFGASVIKNGRIIETHHFFIKPKSKLDSFTTKLTGITQEHLEKGYELQEALEKISSIFKARIMVAHNAAFDHNFLKQKFIDNNIEFEEMISIDTLNLAKVLNPIYRSYRLGEVASKLSVVYDPSIAHRADYDSSVLTNIFILQMSHLKEKGINLFKELNSLSSEKFYSKMFAKDISIIAKNQAGLKELFKINSDVLTKYYFANPKMFWEDIKRSKNLLIGSGGLNSPLIDKLLFSTQEDVLNEIDKYDYIEIPSPNNFSHFWTTKFSDQQIKIQLQKLIKWAKEKNKIIVAIGEPRYNEKWQKIIHEIYINSTGIENSLHPLFIIKKDMDTFYPEQIYKTTNEMKQEFSFLYDPELIEEIVVKNPNLISSQIEKIQVIKDKLYTPKFDDSHIKLKKLVYENAWKKYGKNLPEIIEQRIEKELTPILNYGFDVIYWISSILVQKSLSDGYLVGSRGSIGSSLVATLSGITEVNPLAPHYICSKCQYFELVKDPMTNSGFDLDDKKCPKCNSFLDKDGQTIPFETFLGFKADKVPDIDLNFSGEYQGKIHDEVKRLFGSKHTFRAGTISTVAEKTAYGYIKKYLETASLDYSDNFVDFLTEKSTGVKRTTGQHPGGIIIIPKEFDVEDFTPVNFPANDTESSWKTTHFDFHAIHDNVLKLDILGHDDPTALKMLEKLTGVNVKDIPKKDEKIISIFTSPKALGISSEEILGEKTGALGIPEFGTNFVRQMLSEAKPKTFADLVSISGLSHGTDVWINNAHYIIQSLGKTLDQVISCRDDIMVDLIKKGVPIDLSFTIMEQVRKGKGLSLEQKRKLIEHGIENWYIESMEKIKYMFPKAHATAYVLMAWRVAFYKVYYPLEYYATYFSTRTEFFDIEIMSKDKLTLESKIKELAYRENLRNDNQLTTKEKNTLPTLYIANEMKARGFNIQNINLKISLANDWIIDKNSKSLIPPFNVIDGLGETLAQKIVDSRNEKEFLSVEDFINRTGINSTLVEKFKSMGIFEQIPETNQIFLI.

Residues 404–562 enclose the Exonuclease domain; the sequence is YVVYDIETTG…YDSSVLTNIF (159 aa).

The protein belongs to the DNA polymerase type-C family. PolC subfamily.

It is found in the cytoplasm. It carries out the reaction DNA(n) + a 2'-deoxyribonucleoside 5'-triphosphate = DNA(n+1) + diphosphate. Its function is as follows. Required for replicative DNA synthesis. This DNA polymerase also exhibits 3' to 5' exonuclease activity. The chain is DNA polymerase III PolC-type from Mycoplasmopsis pulmonis (strain UAB CTIP) (Mycoplasma pulmonis).